A 147-amino-acid polypeptide reads, in one-letter code: MLSPRNRMRRRADFDTALRHGRRAGRNALSVALFVPQDTPDQPGGDAPPRVGFSVSKAVGKAVVRKRVQRRLRHLMRERVGSLPAGSLLVVRAKPQAALLDYSELAAQLDSALRAVTRPRGQSSHRTRASREATSAHTTAVGEQPTQ.

The segment at 117–147 (TRPRGQSSHRTRASREATSAHTTAVGEQPTQ) is disordered.

Belongs to the RnpA family. Consists of a catalytic RNA component (M1 or rnpB) and a protein subunit.

The catalysed reaction is Endonucleolytic cleavage of RNA, removing 5'-extranucleotides from tRNA precursor.. Its function is as follows. RNaseP catalyzes the removal of the 5'-leader sequence from pre-tRNA to produce the mature 5'-terminus. It can also cleave other RNA substrates such as 4.5S RNA. The protein component plays an auxiliary but essential role in vivo by binding to the 5'-leader sequence and broadening the substrate specificity of the ribozyme. This Thermobifida fusca (strain YX) protein is Ribonuclease P protein component.